Consider the following 258-residue polypeptide: Phosphate import ATP-binding protein PstB (258 aa).

The ABC transporter domain maps to 13 to 253; sequence IKIENLNLWY…PREKSTEDYI (241 aa). 45 to 52 lines the ATP pocket; it reads GPSGCGKS.

It belongs to the ABC transporter superfamily. Phosphate importer (TC 3.A.1.7) family. The complex is composed of two ATP-binding proteins (PstB), two transmembrane proteins (PstC and PstA) and a solute-binding protein (PstS).

The protein localises to the cell membrane. The enzyme catalyses phosphate(out) + ATP + H2O = ADP + 2 phosphate(in) + H(+). Functionally, part of the ABC transporter complex PstSACB involved in phosphate import. Responsible for energy coupling to the transport system. This chain is Phosphate import ATP-binding protein PstB, found in Methanosarcina barkeri (strain Fusaro / DSM 804).